A 479-amino-acid chain; its full sequence is Anaerobic nitric oxide reductase flavorubredoxin (479 aa).

Residues 30–210 (LRGSSYNSYL…PFSRLVTPKI (181 aa)) are zinc metallo-hydrolase. The Fe cation site is built by His79, Glu81, Asp83, His147, Asp166, and His227. Positions 254 to 393 (ITIFYDTMSN…LCREHGREIA (140 aa)) constitute a Flavodoxin-like domain. FMN-binding positions include 260–264 (TMSNN) and 342–369 (AFGSHGWSGGAVDRLSTRLQDAGFEMSL). The 52-residue stretch at 423–474 (GPRMQCSVCQWIYDPAKGEPMQDVAPGTPWSEVPDNFLCPECSLGKDVFDEL) folds into the Rubredoxin-like domain. Fe cation-binding residues include Cys428, Cys431, Cys461, and Cys464.

The protein in the N-terminal section; belongs to the zinc metallo-hydrolase group 3 family. As to quaternary structure, homotetramer. Fe cation is required as a cofactor. Requires FMN as cofactor.

It localises to the cytoplasm. It participates in nitrogen metabolism; nitric oxide reduction. Anaerobic nitric oxide reductase; uses NADH to detoxify nitric oxide (NO), protecting several 4Fe-4S NO-sensitive enzymes. Has at least 2 reductase partners, only one of which (NorW, flavorubredoxin reductase) has been identified. NO probably binds to the di-iron center; electrons enter from the NorW at rubredoxin and are transferred sequentially to the FMN center and the di-iron center. Also able to function as an aerobic oxygen reductase. The sequence is that of Anaerobic nitric oxide reductase flavorubredoxin from Escherichia coli (strain SMS-3-5 / SECEC).